The sequence spans 1333 residues: Protein grainyhead (1333 aa).

5 disordered regions span residues 52-93 (SLSP…DSPQ), 439-598 (LLGS…PGAR), 617-655 (QTSH…GPYI), 727-784 (RFAG…GGAT), and 853-885 (TAVH…DFGR). The span at 59–68 (GSGGHSGGGN) shows a compositional bias: gly residues. A compositionally biased stretch (low complexity) spans 445–488 (SSSATVSTTGVVSTTTISHHQQQQQQQQQQQQQQQQQHQQQQQH). Basic and acidic residues predominate over residues 520–532 (IKREPEDLRKDPK). Low complexity-rich tracts occupy residues 533–546 (NGNI…NGPG) and 567–596 (PSTP…GSPG). Gly residues predominate over residues 626–642 (GAGGGAGPAGAAGGGGV). Low complexity predominate over residues 749–772 (QQQQQQQQHQQQQQQQQHHQQQQH). Residues 853-877 (TAVHGSQNSPTTSLVDTSTNGSTRS) are compositionally biased toward polar residues. The region spanning 899-1125 (TNVGFRYHLE…DFAKPPVLFS (227 aa)) is the Grh/CP2 DB domain.

Belongs to the grh/CP2 family. Grainyhead subfamily. In terms of tissue distribution, restricted, during embryogenesis, to tissues derived from ectoderm, predominantly the central nervous system (CNS) and the epidermis.

It localises to the nucleus. Its function is as follows. Transcription factor that binds a CNS-specific regulatory element of the Dopa decarboxylase (Ddc) gene. Also interacts with sequences adjacent to other transcription units, including Ultrabithorax (Ubx) and engrailed (en). Activity in vivo may be required only at high levels transiently to activate the expression of Ddc in the CNS. This is Protein grainyhead (grh) from Drosophila melanogaster (Fruit fly).